A 303-amino-acid polypeptide reads, in one-letter code: MSATMRAEIDPLAHSATVDEMVEAITKGDDSVTTIVDDLVWHATPRFVTEVREVPGLPPSFTTTSVTDMRVDASSEKLMLTLDGQEGSEISCETYMRSCLDLPAFKGFSLFVVTPLEDRVNVLGVAPVILSHRLVLYRPTDLIDFTLCIIQMYLENCSTKRATSSLFVQIECILRNISKTITPLLKMRRLMYIGATWTLNTLMCVTNHNPFDQARVLPNYMMAKMLLGQKSNTPAILDAIYSAGYRQTLSKRPITPCPSGVLRCNKAHLNAPLCTKVVADTLYSWWTATDEKPVPESIYVLYD.

This sequence belongs to the herpesviridae cytoplasmic envelopment protein 1 family.

The protein localises to the virion. It is found in the virion tegument. It localises to the host cytoplasm. Its subcellular location is the host Golgi apparatus. In terms of biological role, plays a critical role in cytoplasmic virus egress. Participates in the final step of tegumentation and envelope acquisition within the host cytoplasm. In Equine herpesvirus 1 (strain Ab4p) (EHV-1), this protein is Cytoplasmic envelopment protein 1.